A 421-amino-acid polypeptide reads, in one-letter code: UV-B-induced protein At3g17800, chloroplastic (421 aa).

Disordered stretches follow at residues 1–40 and 74–95; these read MDALTSSLVRSPIVPSRTSDNGSGSMFLTASGPGFTRSGS and VRASSASNDASSGSSPKPIAPL. Residues 1 to 75 constitute a chloroplast transit peptide; that stretch reads MDALTSSLVR…AKTRRSFVVR (75 aa). The span at 16–28 shows a compositional bias: polar residues; sequence SRTSDNGSGSMFL. Over residues 74–88 the composition is skewed to low complexity; the sequence is VRASSASNDASSGSS.

It is found in the plastid. The protein resides in the chloroplast. The polypeptide is UV-B-induced protein At3g17800, chloroplastic (Arabidopsis thaliana (Mouse-ear cress)).